The following is a 2266-amino-acid chain: Little elongation complex subunit 1 (2266 aa).

Residues 23–186 (CASLQQNLNE…KQKNEKELRH (164 aa)) are a coiled coil. 2 disordered regions span residues 223 to 259 (GEGS…PLRT) and 517 to 540 (PAQE…KRPL). The segment covering 250-259 (PPTQGSPLRT) has biased composition (polar residues). Phosphoserine occurs at positions 255, 533, 558, and 589. Residues 591-623 (ELEKEKEDTQGFTLGESPESEDDDSGDGMDVAG) are disordered. Over residues 608–617 (PESEDDDSGD) the composition is skewed to acidic residues. A Phosphoserine modification is found at S707. Position 832 is a phosphothreonine (T832). At S925 the chain carries Phosphoserine. The segment at 925 to 955 (SPEVSASRRKLDFNSPGGSSPVENSDCSTNS) is disordered. Positions 940-955 (PGGSSPVENSDCSTNS) are enriched in polar residues. S958 is subject to Phosphoserine. Disordered stretches follow at residues 977-1001 (VQGD…HGSE) and 1107-1133 (TEVE…QKNL). Residues 984-998 (QRQPQATDLDSSGTH) are compositionally biased toward polar residues. At K1218 the chain carries N6-acetyllysine. 3 disordered regions span residues 1295–1372 (TTEN…PSAL), 1467–1510 (AEKS…KSRL), and 1543–1707 (NSKL…SASE). Composition is skewed to polar residues over residues 1306 to 1319 (RETT…SEPT), 1328 to 1344 (EGSS…NPQS), 1487 to 1505 (NNLS…STNF), 1565 to 1588 (NKPV…QSFS), and 1594 to 1605 (TKTQRSQTQTIL). Residue S1588 is modified to Phosphoserine. 2 stretches are compositionally biased toward low complexity: residues 1609-1620 (DTSTPTDCSPDT) and 1637-1671 (APLI…QVSP). At S1617 the chain carries Phosphoserine. T1642 bears the Phosphothreonine mark. Phosphoserine occurs at positions 1692, 1697, 1699, 1701, 1712, 1838, and 1854. Positions 1809 to 1902 (TGSSSGGDCN…AVSAVSQLPL (94 aa)) are disordered. A compositionally biased stretch (polar residues) spans 1825 to 1843 (LGTQQDSSGKRTLSTSTLR). A compositionally biased stretch (polar residues) spans 1889-1901 (CSSPAVSAVSQLP). S1903 carries the phosphoserine modification.

Belongs to the ICE1 family. Component of the little elongation complex (LEC), at least composed of ELL (ELL, ELL2 or ELL3), ZC3H8, ICE1 and ICE2. Interacts (via N-terminus domain) with ELL. Interacts (via C-terminus domain) with ICE2 and ZC3H8.

Its subcellular location is the nucleus. It localises to the cajal body. Its function is as follows. Component of the little elongation complex (LEC), a complex required to regulate small nuclear RNA (snRNA) gene transcription by RNA polymerase II and III. Specifically acts as a scaffold protein that promotes the LEC complex formation and recruitment and RNA polymerase II occupancy at snRNA genes in subnuclear bodies. The protein is Little elongation complex subunit 1 (ICE1) of Homo sapiens (Human).